The primary structure comprises 228 residues: Transcription repressor OFP8 (228 aa).

Low complexity-rich tracts occupy residues 1–14, 54–79, and 92–101; these read MSGRSSRRGSFSLR, ASSTSTTTAFTATTGGAGTATSTDSS, and EEPAAAQQEQ. 2 disordered regions span residues 1–21 and 36–143; these read MSGRSSRRGSFSLRQPPVVDI and SSSS…QLQE. The segment covering 107–120 has biased composition (basic residues); the sequence is RRRRRQQRRRRRRA. The region spanning 157-216 is the OVATE domain; the sequence is VAVESAEPYEDFRESMVQMVVEKEIYAWDDLNDLLHQFLSLNSPRHHPLILHAFADLWTR.

In terms of assembly, interacts with GSK2. In terms of processing, phosphorylated on serine and threonine residues by GSK2. Dephosphorylated during response to brassinosteroid. As to expression, expressed in roots, stems, stem nodes, young leaves, leaf sheaths, lamina joints, young spikelets, inflorescences, stamens and ovaries, embryos and seeds.

The protein localises to the nucleus. Its subcellular location is the cytoplasm. Functionally, probable transcriptional repressor that regulates multiple aspects of plant growth and development, partly through brassinosteroid (BR) signaling pathway. Acts downstream of the kinase GSK2, a negative regulator of BR signaling. The protein is Transcription repressor OFP8 of Oryza sativa subsp. japonica (Rice).